The primary structure comprises 644 residues: Phosphomethylpyrimidine synthase (644 aa).

Residues asparagine 236, methionine 265, tyrosine 294, histidine 330, 350–352, 391–394, and glutamate 430 contribute to the substrate site; these read SRG and DGLR. Histidine 434 is a binding site for Zn(2+). Tyrosine 457 lines the substrate pocket. Histidine 498 contacts Zn(2+). 3 residues coordinate [4Fe-4S] cluster: cysteine 578, cysteine 581, and cysteine 586. Residues 623 to 644 are disordered; the sequence is RQKSEEFKASGSELYHPAVEAE.

It belongs to the ThiC family. In terms of assembly, homodimer. [4Fe-4S] cluster serves as cofactor.

It catalyses the reaction 5-amino-1-(5-phospho-beta-D-ribosyl)imidazole + S-adenosyl-L-methionine = 4-amino-2-methyl-5-(phosphooxymethyl)pyrimidine + CO + 5'-deoxyadenosine + formate + L-methionine + 3 H(+). The protein operates within cofactor biosynthesis; thiamine diphosphate biosynthesis. Catalyzes the synthesis of the hydroxymethylpyrimidine phosphate (HMP-P) moiety of thiamine from aminoimidazole ribotide (AIR) in a radical S-adenosyl-L-methionine (SAM)-dependent reaction. The polypeptide is Phosphomethylpyrimidine synthase (Aliivibrio fischeri (strain MJ11) (Vibrio fischeri)).